The primary structure comprises 477 residues: MEQHGTNEGALWGGRFSGGPSEAMFALSVSTHFDWVLAPYDVLASKAHAKVLHQAELLSDEDLATMLAGLDQLGKDVADGAFGPLPSDEDVHGAMERGLIDRVGPEVGGRLRAGRSRNDQVATLFRMWVRDAVRDIALGTTELVDALSAQAKAHADAIMPGKTHFQAAQPVLLAHQLLAHAQPLLRDIDRIRDLDKRLAVSPYGSGALAGSSLKLNPEAIAEELGFDSAADNSIDATSSRDFASETAFVLAQLAVDMSRLAEEIIAWCTPEFGYITLSDSWSTGSSIMPQKKNPDVAELTRGKSGRLIGNLTGLLATLKAQPLAYNRDLQEDKEPIVDSVAQLNLLLPAMTGLVSTLTFNTERMRELAPAGFTLATDLAEWMVRQGVPFREAHEASGACVRIAESRGVDLIDLTDEELSGVDARLTPEVREVLTIDGAVASRATRGGTAGVRVAEQRARVDAASTAHAEWARAGVRR.

The protein belongs to the lyase 1 family. Argininosuccinate lyase subfamily.

The protein localises to the cytoplasm. The enzyme catalyses 2-(N(omega)-L-arginino)succinate = fumarate + L-arginine. It functions in the pathway amino-acid biosynthesis; L-arginine biosynthesis; L-arginine from L-ornithine and carbamoyl phosphate: step 3/3. This chain is Argininosuccinate lyase, found in Corynebacterium glutamicum (strain R).